We begin with the raw amino-acid sequence, 163 residues long: SsrA-binding protein (163 aa).

Belongs to the SmpB family.

Its subcellular location is the cytoplasm. Functionally, required for rescue of stalled ribosomes mediated by trans-translation. Binds to transfer-messenger RNA (tmRNA), required for stable association of tmRNA with ribosomes. tmRNA and SmpB together mimic tRNA shape, replacing the anticodon stem-loop with SmpB. tmRNA is encoded by the ssrA gene; the 2 termini fold to resemble tRNA(Ala) and it encodes a 'tag peptide', a short internal open reading frame. During trans-translation Ala-aminoacylated tmRNA acts like a tRNA, entering the A-site of stalled ribosomes, displacing the stalled mRNA. The ribosome then switches to translate the ORF on the tmRNA; the nascent peptide is terminated with the 'tag peptide' encoded by the tmRNA and targeted for degradation. The ribosome is freed to recommence translation, which seems to be the essential function of trans-translation. The chain is SsrA-binding protein from Corynebacterium diphtheriae (strain ATCC 700971 / NCTC 13129 / Biotype gravis).